A 4568-amino-acid chain; its full sequence is Dynein heavy chain, cytoplasmic (4568 aa).

The interval 1 to 1826 (MDSGNESSII…VVKMANSQFF (1826 aa)) is stem. 5 coiled-coil regions span residues 587–652 (QTRL…VLGK), 814–844 (KLAE…NVLK), 1241–1274 (QEAL…LDLS), 1324–1340 (RKIR…LKQL), and 1559–1591 (VNMQ…RERS). 4 AAA regions span residues 1827–2049 (YGFE…VLVS), 2118–2394 (QQLS…PTPQ), 2498–2747 (EIES…WVRG), and 2842–3111 (GFYE…GHRV). ATP is bound by residues 1865–1872 (GPAGTGKT), 2163–2170 (GSSGSGKT), 2537–2544 (GPPGSGKT), and 2880–2887 (GTAGAGKT). Coiled coils occupy residues 3132 to 3229 (EKRS…AQVE), 3339 to 3432 (ARAQ…RDRW), and 3707 to 3739 (NSVI…EVDA). Residues 3132-3432 (EKRSDLEEEK…SSLRSERDRW (301 aa)) form a stalk region. AAA stretches follow at residues 3496-3725 (LSTV…EVAQ) and 3954-4169 (AHRV…TLDA). Positions 4359–4386 (QLLKDIRRDLNEISAVCRAEKKQNNETR) form a coiled coil.

Belongs to the dynein heavy chain family. Consists of at least two heavy chains and a number of intermediate and light chains.

Its subcellular location is the cytoplasm. The protein localises to the cytoskeleton. Functionally, cytoplasmic dynein acts as a motor for the intracellular retrograde motility of vesicles and organelles along microtubules. Dynein has ATPase activity; the force-producing power stroke is thought to occur on release of ADP. May play a role in nuclear migration in hypodermal precursor cells. May be involved in the transport of synaptic vesicle components towards the axon of the DA motor neuron. This function may involve the regulation of dynein by pct-1 and/or cdk-5. Involved in the formation of synapses in the dorsal region during synaptic remodeling of DD motor neurons. Required for anterograde trafficking of dense-core vesicles in the DB motor neuron dendrites. Required for the formation of dendritic branches of PVD sensory neurons. May also play a role in GABAergic synaptic vesicle localization in the ventral nerve cord. May play a role in the pairing of homologous chromosomes during meiosis. This is Dynein heavy chain, cytoplasmic from Caenorhabditis elegans.